Consider the following 348-residue polypeptide: Rhodopsin (348 aa).

An N-acetylmethionine modification is found at M1. The Extracellular segment spans residues M1–Q36. 2 N-linked (GlcNAc...) asparagine glycosylation sites follow: N2 and N15. Residues F37 to V61 form a helical membrane-spanning segment. Over T62–N73 the chain is Cytoplasmic. Residues Y74–Y96 form a helical membrane-spanning segment. Over T97–C110 the chain is Extracellular. C110 and C187 form a disulfide bridge. A helical transmembrane segment spans residues N111–I133. The short motif at E134–Y136 is the 'Ionic lock' involved in activated form stabilization element. Residues E134–H152 lie on the Cytoplasmic side of the membrane. A helical membrane pass occupies residues A153–V173. Residues G174–S202 are Extracellular-facing. E201 lines the Zn(2+) pocket. Residues F203–G224 form a helical membrane-spanning segment. Residues Q225 to R252 are Cytoplasmic-facing. Residues M253–Y274 traverse the membrane as a helical segment. At I275–I286 the chain is on the extracellular side. Zn(2+) is bound at residue Q279. A helical transmembrane segment spans residues F287–M308. K296 is modified (N6-(retinylidene)lysine). The Cytoplasmic segment spans residues M309–A348. 2 S-palmitoyl cysteine lipidation sites follow: C322 and C323. The tract at residues D330–A348 is interaction with SAG. Position 334 is a phosphoserine (S334). S334 bears the Phosphoserine; by RK and GRK7 mark. 2 positions are modified to phosphothreonine: T335 and T336. T335 and T336 each carry phosphothreonine; by RK and GRK7. S338 carries the phosphoserine; by RK and GRK7 modification. T340 and T342 each carry phosphothreonine. Position 343 is a phosphoserine; by RK and GRK7 (S343).

This sequence belongs to the G-protein coupled receptor 1 family. Opsin subfamily. As to quaternary structure, homodimer. May form a complex composed of RHO, GRK1 and RCVRN in a Ca(2+)-dependent manner; RCVRN prevents the interaction between GRK1 and RHO. Interacts with GRK1. Interacts (phosphorylated form) with SAG. Interacts with GNAT1. Interacts with GNAT3. SAG and G-proteins compete for a common binding site. Interacts with PRCD; the interaction promotes PRCD stability. Forms a complex with ASAP1 and ARF4. Forms a complex with ASAP1, RAB11A, Rabin8/RAB3IP, ARF4 and RAB11FIP3; the complex regulates Golgi-to-cilia rhodopsin/RHO transport in photoreceptors. In terms of processing, phosphorylated on some or all of the serine and threonine residues present in the C-terminal region. Post-translationally, contains one covalently linked retinal chromophore. Upon light absorption, the covalently bound 11-cis-retinal is converted to all-trans-retinal. After hydrolysis of the Schiff base and release of the covalently bound all-trans-retinal, active rhodopsin is regenerated by binding of a fresh molecule of 11-cis-retinal.

The protein localises to the membrane. Its subcellular location is the cell projection. It localises to the cilium. It is found in the photoreceptor outer segment. In terms of biological role, photoreceptor required for image-forming vision at low light intensity. Required for photoreceptor cell viability after birth. Light-induced isomerization of 11-cis to all-trans retinal triggers a conformational change that activates signaling via G-proteins. Subsequent receptor phosphorylation mediates displacement of the bound G-protein alpha subunit by the arrestin SAG and terminates signaling. The sequence is that of Rhodopsin (RHO) from Ovis aries (Sheep).